Consider the following 95-residue polypeptide: Small ribosomal subunit protein bS6 (95 aa).

The protein belongs to the bacterial ribosomal protein bS6 family.

Its function is as follows. Binds together with bS18 to 16S ribosomal RNA. This is Small ribosomal subunit protein bS6 from Aster yellows witches'-broom phytoplasma (strain AYWB).